Reading from the N-terminus, the 234-residue chain is Redox-sensing transcriptional repressor Rex (234 aa).

The H-T-H motif DNA-binding region spans Thr17–Phe56. An NAD(+)-binding site is contributed by Gly91 to Gly96.

Belongs to the transcriptional regulatory Rex family. As to quaternary structure, homodimer.

Its subcellular location is the cytoplasm. In terms of biological role, modulates transcription in response to changes in cellular NADH/NAD(+) redox state. This chain is Redox-sensing transcriptional repressor Rex, found in Deinococcus radiodurans (strain ATCC 13939 / DSM 20539 / JCM 16871 / CCUG 27074 / LMG 4051 / NBRC 15346 / NCIMB 9279 / VKM B-1422 / R1).